We begin with the raw amino-acid sequence, 282 residues long: Elongation factor Ts (282 aa).

An involved in Mg(2+) ion dislocation from EF-Tu region spans residues 79–82 (TDFV).

It belongs to the EF-Ts family.

It is found in the cytoplasm. Associates with the EF-Tu.GDP complex and induces the exchange of GDP to GTP. It remains bound to the aminoacyl-tRNA.EF-Tu.GTP complex up to the GTP hydrolysis stage on the ribosome. The protein is Elongation factor Ts of Shewanella loihica (strain ATCC BAA-1088 / PV-4).